We begin with the raw amino-acid sequence, 232 residues long: 2,3,4,5-tetrahydropyridine-2,6-dicarboxylate N-acetyltransferase (232 aa).

Belongs to the transferase hexapeptide repeat family. DapH subfamily.

It carries out the reaction (S)-2,3,4,5-tetrahydrodipicolinate + acetyl-CoA + H2O = L-2-acetamido-6-oxoheptanedioate + CoA. Its pathway is amino-acid biosynthesis; L-lysine biosynthesis via DAP pathway; LL-2,6-diaminopimelate from (S)-tetrahydrodipicolinate (acetylase route): step 1/3. In terms of biological role, catalyzes the transfer of an acetyl group from acetyl-CoA to tetrahydrodipicolinate. This chain is 2,3,4,5-tetrahydropyridine-2,6-dicarboxylate N-acetyltransferase, found in Streptococcus sanguinis (strain SK36).